We begin with the raw amino-acid sequence, 458 residues long: MVPRTGRRKTNYAVPPPVLQLASGWSALVVCLLHLLFSFLYGGGQQPIHPRPSSRLPRIFSFADRDIMRIGLPTQDFHAEHLGAIDPSSHHHMSQMAGQNGISHAQGRRGPKYRTSCDRCQAAKVKCGHEKPSCRRCTYHKVECVYGISRRMGRPRAKKNSGKDASPSPQGSINGASDENSRSKSATPAPVSFTGTEPITEARQSPVANAEGGRISRAESTQRAEPWTPSLTTNFEHPETSEGADDSAHGPMMQSMNTPLTFLPTENRMELDDFNDYPPMSSFMEDLADPMMSQQPISAPPSLDILDPHALIPDRTPTGNTRDTFNQVDTGLSVSLPQTTQLWNTSQAHQLHALFESNSTSKSKRRASTGQEISGIVSFNSVGHSNSGFGNKRMGELQIATGPLVSIGAGEQSAMMNIGPNPDTSSVAASRKFAMEEEDDPCSEIKLNPNRLRLEDGK.

Positions 117 to 144 (CDRCQAAKVKCGHEKPSCRRCTYHKVEC) form a DNA-binding region, zn(2)-C6 fungal-type. Disordered stretches follow at residues 153-256 (GRPR…MQSM) and 435-458 (MEEE…EDGK). Polar residues-rich tracts occupy residues 167–186 (PSPQ…SKSA), 193–207 (FTGT…QSPV), and 223–235 (RAEP…TTNF).

Its subcellular location is the nucleus. Transcription factor; part of the gene cluster that mediates the biosynthesis of 11'-deoxyverticillin A, one of the dimeric epipolythiodioxopiperazines (ETPs) from the verticillin family that act as mycotoxins. 11'-deoxyverticillin A is required for normal conidiation. Directly binds the consensus motif 5'-(T/C)(C/A)(G/T)GN3CC(G/T)(A/G)(G/C)-3' localized in the upstream regions of the verticillin biosynthetic genes. This Clonostachys rogersoniana protein is Transcription factor verZ.